Consider the following 174-residue polypeptide: MSVSQARQNYHAESEAGINRQINMELYASYSYQSMAYYFDRDDVALPGFHKFFKHQSEEEREHAEKLMKYQNKRGGRIVLQDIKKPDRDEWGTGLEAMQVALQLEKSVNQSLLDLHKLCTSHDDAQMADFLESEFLEEQVKSIKELSDYITNLKRVGPGLGEYIFDKETLSSSS.

Residues 8–157 form the Ferritin-like diiron domain; sequence QNYHAESEAG…DYITNLKRVG (150 aa). Residues glutamate 25, glutamate 60, histidine 63, glutamate 105, and glutamine 139 each coordinate Fe cation.

Belongs to the ferritin family. As to quaternary structure, oligomer of 12 or 24 subunits. The functional molecule is roughly spherical and contains a central cavity into which the polymeric mineral iron core is deposited. In terms of tissue distribution, expressed in somatic tissues but not in oocytes.

Its subcellular location is the cytoplasm. It carries out the reaction 4 Fe(2+) + O2 + 4 H(+) = 4 Fe(3+) + 2 H2O. Functionally, stores iron in a soluble, non-toxic, readily available form. Important for iron homeostasis. Has ferroxidase activity. Iron is taken up in the ferrous form and deposited as ferric hydroxides after oxidation. The chain is Soma ferritin from Lymnaea stagnalis (Great pond snail).